We begin with the raw amino-acid sequence, 166 residues long: MIPAYVPNSAAALFGGGTPIDLGRTFSDGRRVFGDGKTYRGFFGGVVSGVLVGLIEIWAATAFSLSALPQQTFLSVTLLATGALLGDLAKSFLKRRLGKDRGESWFLADQYDLVVGSFLLILIFDPQWLFGTITLPIAVWIVVMTPLLHRVVNIIGYYIGVKEVPW.

Helical transmembrane passes span 42–62 (FFGGVVSGVLVGLIEIWAATA), 73–93 (FLSVTLLATGALLGDLAKSFL), 104–124 (SWFLADQYDLVVGSFLLILIF), and 128–148 (WLFGTITLPIAVWIVVMTPLL).

The protein belongs to the CDP-archaeol synthase family. Mg(2+) is required as a cofactor.

Its subcellular location is the cell membrane. The enzyme catalyses 2,3-bis-O-(geranylgeranyl)-sn-glycerol 1-phosphate + CTP + H(+) = CDP-2,3-bis-O-(geranylgeranyl)-sn-glycerol + diphosphate. It participates in membrane lipid metabolism; glycerophospholipid metabolism. Functionally, catalyzes the formation of CDP-2,3-bis-(O-geranylgeranyl)-sn-glycerol (CDP-archaeol) from 2,3-bis-(O-geranylgeranyl)-sn-glycerol 1-phosphate (DGGGP) and CTP. This reaction is the third ether-bond-formation step in the biosynthesis of archaeal membrane lipids. In Methanoculleus marisnigri (strain ATCC 35101 / DSM 1498 / JR1), this protein is CDP-archaeol synthase.